We begin with the raw amino-acid sequence, 249 residues long: Hydroxyacylglutathione hydrolase (249 aa).

Zn(2+)-binding residues include histidine 54, histidine 56, aspartate 58, histidine 59, histidine 113, aspartate 138, and histidine 176.

The protein belongs to the metallo-beta-lactamase superfamily. Glyoxalase II family. Monomer. Zn(2+) is required as a cofactor.

The enzyme catalyses an S-(2-hydroxyacyl)glutathione + H2O = a 2-hydroxy carboxylate + glutathione + H(+). It participates in secondary metabolite metabolism; methylglyoxal degradation; (R)-lactate from methylglyoxal: step 2/2. Functionally, thiolesterase that catalyzes the hydrolysis of S-D-lactoyl-glutathione to form glutathione and D-lactic acid. The chain is Hydroxyacylglutathione hydrolase from Synechococcus sp. (strain CC9605).